The chain runs to 463 residues: Putative pentatricopeptide repeat-containing protein At4g17915 (463 aa).

PPR repeat units lie at residues 12–46 (STRL…GVDP), 47–81 (DVVT…GIRP), 82–116 (DVAT…GIYP), 117–152 (DLWS…GLNP), 153–186 (GPDT…RFKP), 187–221 (ELMT…GYTP), 222–256 (NAVT…GYTY), 257–291 (DGYA…GRRH), 292–326 (DIVS…GMKA), 327–361 (DEYT…GIGL), 362–392 (NLVT…MEVK), and 393–427 (DEYT…GIKI).

It belongs to the PPR family. P subfamily.

The protein is Putative pentatricopeptide repeat-containing protein At4g17915 of Arabidopsis thaliana (Mouse-ear cress).